Reading from the N-terminus, the 426-residue chain is Serine hydroxymethyltransferase (426 aa).

(6S)-5,6,7,8-tetrahydrofolate contacts are provided by residues leucine 118 and 122-124 (GHL). Position 227 is an N6-(pyridoxal phosphate)lysine (lysine 227).

Belongs to the SHMT family. Homodimer. Requires pyridoxal 5'-phosphate as cofactor.

Its subcellular location is the cytoplasm. The enzyme catalyses (6R)-5,10-methylene-5,6,7,8-tetrahydrofolate + glycine + H2O = (6S)-5,6,7,8-tetrahydrofolate + L-serine. It functions in the pathway one-carbon metabolism; tetrahydrofolate interconversion. The protein operates within amino-acid biosynthesis; glycine biosynthesis; glycine from L-serine: step 1/1. In terms of biological role, catalyzes the reversible interconversion of serine and glycine with tetrahydrofolate (THF) serving as the one-carbon carrier. This reaction serves as the major source of one-carbon groups required for the biosynthesis of purines, thymidylate, methionine, and other important biomolecules. Also exhibits THF-independent aldolase activity toward beta-hydroxyamino acids, producing glycine and aldehydes, via a retro-aldol mechanism. The chain is Serine hydroxymethyltransferase from Mycobacterium avium (strain 104).